A 52-amino-acid polypeptide reads, in one-letter code: Nuclear respiratory factor 1 (52 aa).

Belongs to the NRF1/Ewg family. As to quaternary structure, homodimer. Binds DNA as a dimer. Interacts with PPRC1. In terms of processing, phosphorylation enhances DNA binding. Expressed at high levels in the lung and testis, at intermediate levels in the kidney, heart and brain and at low levels in the muscle and liver.

Its subcellular location is the nucleus. Transcription factor that activates the expression of the EIF2S1 (EIF2-alpha) gene. Links the transcriptional modulation of key metabolic genes to cellular growth and development. Implicated in the control of nuclear genes required for respiration, heme biosynthesis, and mitochondrial DNA transcription and replication. The sequence is that of Nuclear respiratory factor 1 (Nrf1) from Rattus norvegicus (Rat).